The following is a 310-amino-acid chain: Carbamate kinase (310 aa).

This sequence belongs to the carbamate kinase family.

The protein localises to the cytoplasm. The catalysed reaction is hydrogencarbonate + NH4(+) + ATP = carbamoyl phosphate + ADP + H2O + H(+). It functions in the pathway metabolic intermediate metabolism; carbamoyl phosphate degradation; CO(2) and NH(3) from carbamoyl phosphate: step 1/1. This is Carbamate kinase (arcC) from Staphylococcus epidermidis (strain ATCC 35984 / DSM 28319 / BCRC 17069 / CCUG 31568 / BM 3577 / RP62A).